Reading from the N-terminus, the 124-residue chain is UPF0299 membrane protein VP1300 (124 aa).

4 consecutive transmembrane segments (helical) span residues 9-29, 35-55, 72-92, and 95-115; these read LIQL…GITI, VSVP…TLGL, MILL…MLLA, and LPII…LAWL.

The protein belongs to the UPF0299 family.

The protein localises to the cell inner membrane. The sequence is that of UPF0299 membrane protein VP1300 from Vibrio parahaemolyticus serotype O3:K6 (strain RIMD 2210633).